The sequence spans 568 residues: Urease subunit alpha (568 aa).

Residues 132–568 (GAIDTHVHYI…LPLAQLYNLF (437 aa)) form the Urease domain. Positions 137, 139, and 219 each coordinate Ni(2+). Position 219 is an N6-carboxylysine (K219). Residue H221 coordinates substrate. Positions 248 and 274 each coordinate Ni(2+). The active-site Proton donor is the H322. A Ni(2+)-binding site is contributed by D362.

The protein belongs to the metallo-dependent hydrolases superfamily. Urease alpha subunit family. As to quaternary structure, heterotrimer of UreA (gamma), UreB (beta) and UreC (alpha) subunits. Three heterotrimers associate to form the active enzyme. The cofactor is Ni cation. In terms of processing, carboxylation allows a single lysine to coordinate two nickel ions.

Its subcellular location is the cytoplasm. The enzyme catalyses urea + 2 H2O + H(+) = hydrogencarbonate + 2 NH4(+). It functions in the pathway nitrogen metabolism; urea degradation; CO(2) and NH(3) from urea (urease route): step 1/1. This Azobacteroides pseudotrichonymphae genomovar. CFP2 protein is Urease subunit alpha.